The chain runs to 351 residues: Heat-inducible transcription repressor HrcA (351 aa).

Belongs to the HrcA family.

In terms of biological role, negative regulator of class I heat shock genes (grpE-dnaK-dnaJ and groELS operons). Prevents heat-shock induction of these operons. The sequence is that of Heat-inducible transcription repressor HrcA from Mycoplasma pneumoniae (strain ATCC 29342 / M129 / Subtype 1) (Mycoplasmoides pneumoniae).